The sequence spans 150 residues: Holo-[acyl-carrier-protein] synthase (150 aa).

Residues aspartate 8 and glutamate 57 each coordinate Mg(2+).

This sequence belongs to the P-Pant transferase superfamily. AcpS family. It depends on Mg(2+) as a cofactor.

Its subcellular location is the cytoplasm. The catalysed reaction is apo-[ACP] + CoA = holo-[ACP] + adenosine 3',5'-bisphosphate + H(+). Its function is as follows. Transfers the 4'-phosphopantetheine moiety from coenzyme A to a Ser of acyl-carrier-protein. This is Holo-[acyl-carrier-protein] synthase from Jannaschia sp. (strain CCS1).